Reading from the N-terminus, the 245-residue chain is Outer membrane protein assembly factor BamD (245 aa).

Positions 1-19 are cleaved as a signal peptide; sequence MTRMKYLVAAATLSLFLAG. Cys-20 is lipidated: N-palmitoyl cysteine. The S-diacylglycerol cysteine moiety is linked to residue Cys-20.

It belongs to the BamD family. As to quaternary structure, part of the Bam complex, which is composed of the outer membrane protein BamA, and four lipoproteins BamB, BamC, BamD and BamE.

The protein localises to the cell outer membrane. In terms of biological role, part of the outer membrane protein assembly complex, which is involved in assembly and insertion of beta-barrel proteins into the outer membrane. Constitutes, with BamA, the core component of the assembly machinery. This chain is Outer membrane protein assembly factor BamD, found in Escherichia coli O157:H7.